The sequence spans 249 residues: UPF0758 protein Oant_1909 (249 aa).

The region spanning 127–249 (VLGSWNKVIE…HASFRGLGLI (123 aa)) is the MPN domain. The Zn(2+) site is built by His198, His200, and Asp211. The JAMM motif motif lies at 198 to 211 (HNHPSGDPTPSRAD).

The protein belongs to the UPF0758 family.

This chain is UPF0758 protein Oant_1909, found in Brucella anthropi (strain ATCC 49188 / DSM 6882 / CCUG 24695 / JCM 21032 / LMG 3331 / NBRC 15819 / NCTC 12168 / Alc 37) (Ochrobactrum anthropi).